Reading from the N-terminus, the 373-residue chain is GTP cyclohydrolase 1 type 2 homolog (373 aa).

His-67, His-68, Asp-106, His-333, and Glu-336 together coordinate a divalent metal cation.

This sequence belongs to the GTP cyclohydrolase I type 2/NIF3 family. In terms of assembly, homohexamer.

This is GTP cyclohydrolase 1 type 2 homolog from Listeria innocua serovar 6a (strain ATCC BAA-680 / CLIP 11262).